Here is a 609-residue protein sequence, read N- to C-terminus: NURS complex subunit pir2 (609 aa).

The span at 1-25 shows a compositional bias: basic and acidic residues; it reads MSEVHQESEVEYSRWKRERSPERSQ. Disordered stretches follow at residues 1–60 and 187–210; these read MSEV…RASG and EKPS…QLSK. The span at 27-36 shows a compositional bias: low complexity; the sequence is RSQSPPGEQS. Phosphoserine occurs at positions 28 and 30. Basic and acidic residues predominate over residues 37 to 57; that stretch reads AYHRERSPLRKRGNYYDDRTR. A compositionally biased stretch (polar residues) spans 201–210; it reads LPSNDPQLSK. A C2H2-type zinc finger spans residues 474–499; that stretch reads YRCHVGTCAKLFLGPEFVRKHINKKH.

The protein belongs to the ARS2 family. In terms of assembly, interacts with ccr4.

The protein resides in the nucleus. The sequence is that of NURS complex subunit pir2 from Schizosaccharomyces pombe (strain 972 / ATCC 24843) (Fission yeast).